A 420-amino-acid chain; its full sequence is D-tagatose-1,6-bisphosphate aldolase subunit GatZ (420 aa).

Belongs to the GatZ/KbaZ family. GatZ subfamily. In terms of assembly, forms a complex with GatY.

It functions in the pathway carbohydrate metabolism; D-tagatose 6-phosphate degradation; D-glyceraldehyde 3-phosphate and glycerone phosphate from D-tagatose 6-phosphate: step 2/2. In terms of biological role, component of the tagatose-1,6-bisphosphate aldolase GatYZ that is required for full activity and stability of the Y subunit. Could have a chaperone-like function for the proper and stable folding of GatY. When expressed alone, GatZ does not show any aldolase activity. Is involved in the catabolism of galactitol. The polypeptide is D-tagatose-1,6-bisphosphate aldolase subunit GatZ (Escherichia coli O8 (strain IAI1)).